We begin with the raw amino-acid sequence, 147 residues long: MALRACGLIIFRRCLIPKVDNNAIEFLLLQASDGIHHWTPPKGHVEPGEDDLETALRETQEEAGIEAGQLTIIEGFKRELNYVARNKPKTVIYWLAEVKDYDVEIRLSHEHQAYRWLGLEEACQLAQFKEMKAALQEGHQFLCSIEA.

Positions 1-139 (MALRACGLII…EMKAALQEGH (139 aa)) constitute a Nudix hydrolase domain. Ala-2 carries the post-translational modification N-acetylalanine. Positions 43–64 (GHVEPGEDDLETALRETQEEAG) match the Nudix box motif.

Belongs to the Nudix hydrolase family. Requires a divalent metal cation as cofactor.

It carries out the reaction P(1),P(4)-bis(5'-guanosyl) tetraphosphate + H2O = GMP + GTP + 2 H(+). The enzyme catalyses a 5'-end CoA-ribonucleoside in mRNA + H2O = a 5'-end phospho-adenosine-phospho-ribonucleoside in mRNA + (R)-4'-phosphopantetheine + 2 H(+). The catalysed reaction is a 5'-end FAD-phospho-ribonucleoside in mRNA + H2O = a 5'-end phospho-adenosine-phospho-ribonucleoside in mRNA + FMN + 2 H(+). Functionally, catalyzes the asymmetric hydrolysis of diadenosine 5',5'''-P1,P4-tetraphosphate (Ap4A) to yield AMP and ATP. Exhibits decapping activity towards FAD-capped RNAs and dpCoA-capped RNAs in vitro. The sequence is that of Bis(5'-nucleosyl)-tetraphosphatase [asymmetrical] (NUDT2) from Homo sapiens (Human).